Reading from the N-terminus, the 745-residue chain is Mitogen-activated protein kinase kinase kinase zak-1 (745 aa).

Residues 31 to 305 (IQVGDHIGVG…KVMDECEKFM (275 aa)) enclose the Protein kinase domain. ATP-binding positions include 37–45 (IGVGTFGAV) and lysine 63. The active-site Proton acceptor is the aspartate 159. Residues 307-352 (LEDWKTEIEKQEKNVEKMRKDLEKRREQLEIREKALKQRMKVEQAV) are a coiled coil. Positions 366–438 (WSEHHTSHWV…MKMIRKLADT (73 aa)) constitute an SAM domain. Residues 693–745 (LTRRRRTTTTNSEDTEKSDTNNKTPESQARRVHVHGGKDKWNWKKGKSRPKFT) form a disordered region. Residues 735 to 745 (WKKGKSRPKFT) show a composition bias toward basic residues.

Belongs to the protein kinase superfamily. STE Ser/Thr protein kinase family. MAP kinase kinase kinase subfamily. Requires Mg(2+) as cofactor. In terms of tissue distribution, widely expressed; expressed in most tissues, including intestines, muscle and the nervous system.

Its subcellular location is the cytoplasm. The protein resides in the nucleus. The enzyme catalyses L-seryl-[protein] + ATP = O-phospho-L-seryl-[protein] + ADP + H(+). It carries out the reaction L-threonyl-[protein] + ATP = O-phospho-L-threonyl-[protein] + ADP + H(+). Stress-activated component of a protein kinase signal transduction cascade that promotes programmed cell death in response to ribotoxic stress. Acts as the proximal sensor of ribotoxic stress: directly binds to the ribosome, thereby acting as a sentinel for colliding ribosomes. Upon ribosome collisions, activates the stress-activated protein kinase signal transduction cascade, leading to programmed cell death. Acts by catalyzing phosphorylation of MAP kinase kinases, leading to activation of the JNK and MAP kinase p38 pathways. In Caenorhabditis elegans, this protein is Mitogen-activated protein kinase kinase kinase zak-1.